We begin with the raw amino-acid sequence, 170 residues long: Putative calmodulin-like protein 6 (170 aa).

EF-hand domains lie at 8 to 43, 44 to 79, 84 to 119, and 120 to 155; these read QQIS…LGMA, PSQE…KLYE, DDEE…LGEE, and MTED…TWNI. Ca(2+)-binding residues include Asp21, Asn23, Asp25, Cys27, Glu32, Asp57, Asp59, Asn61, Thr63, Glu68, Asp97, Asp99, Asn101, Glu108, Asp133, Asn135, Asp137, Gln139, and Glu144.

The protein belongs to the calmodulin family.

In terms of biological role, potential calcium sensor. The sequence is that of Putative calmodulin-like protein 6 (CML6) from Oryza sativa subsp. japonica (Rice).